The following is a 1390-amino-acid chain: DNA-directed RNA polymerase subunit beta (1390 aa).

The protein belongs to the RNA polymerase beta chain family. In terms of assembly, the RNAP catalytic core consists of 2 alpha, 1 beta, 1 beta' and 1 omega subunit. When a sigma factor is associated with the core the holoenzyme is formed, which can initiate transcription.

The enzyme catalyses RNA(n) + a ribonucleoside 5'-triphosphate = RNA(n+1) + diphosphate. Functionally, DNA-dependent RNA polymerase catalyzes the transcription of DNA into RNA using the four ribonucleoside triphosphates as substrates. This Rhodopseudomonas palustris (strain HaA2) protein is DNA-directed RNA polymerase subunit beta.